We begin with the raw amino-acid sequence, 131 residues long: Small ribosomal subunit protein uS11 (131 aa).

It belongs to the universal ribosomal protein uS11 family. Part of the 30S ribosomal subunit. Interacts with proteins S7 and S18. Binds to IF-3.

Functionally, located on the platform of the 30S subunit, it bridges several disparate RNA helices of the 16S rRNA. Forms part of the Shine-Dalgarno cleft in the 70S ribosome. The polypeptide is Small ribosomal subunit protein uS11 (Dictyoglomus turgidum (strain DSM 6724 / Z-1310)).